The chain runs to 244 residues: Triosephosphate isomerase (244 aa).

8–10 is a binding site for substrate; sequence NWK. His-93 serves as the catalytic Electrophile. The Proton acceptor role is filled by Glu-161. Residues Gly-167, Ser-206, and 227-228 each bind substrate; that span reads GG.

It belongs to the triosephosphate isomerase family. Homodimer.

The protein resides in the cytoplasm. The catalysed reaction is D-glyceraldehyde 3-phosphate = dihydroxyacetone phosphate. It participates in carbohydrate biosynthesis; gluconeogenesis. Its pathway is carbohydrate degradation; glycolysis; D-glyceraldehyde 3-phosphate from glycerone phosphate: step 1/1. Involved in the gluconeogenesis. Catalyzes stereospecifically the conversion of dihydroxyacetone phosphate (DHAP) to D-glyceraldehyde-3-phosphate (G3P). The protein is Triosephosphate isomerase of Deinococcus radiodurans (strain ATCC 13939 / DSM 20539 / JCM 16871 / CCUG 27074 / LMG 4051 / NBRC 15346 / NCIMB 9279 / VKM B-1422 / R1).